The sequence spans 1563 residues: Rab-3-interacting molecule unc-10 (1563 aa).

A RabBD domain is found at 7–133; it reads MPDLSHLSAE…AKTGKWFQPE (127 aa). Residues 25–35 are compositionally biased toward basic and acidic residues; that stretch reads FKRQKDEEAKE. The interval 25-50 is disordered; it reads FKRQKDEEAKETQISQKASEELSELD. The FYVE-type zinc finger occupies 66-121; that stretch reads TQDDAICQICQKTKFADGIGHKCFYCQLRSCARCGGRAQSKNKAIWACSLCQKRQQ. Positions 72, 75, 88, 91, 96, 99, 113, and 116 each coordinate Zn(2+). 2 disordered regions span residues 128–466 and 582–605; these read KWFQ…DHLN and GGLD…RNDH. Over residues 172-182 the composition is skewed to polar residues; that stretch reads NTPNYQNNQQP. 2 stretches are compositionally biased toward low complexity: residues 190–284 and 300–316; these read NHNQ…RNQT and QTPQ…VGAA. Residues 326–345 show a composition bias toward basic and acidic residues; the sequence is QEQHHQQMNEQRTDNNRMRE. 2 stretches are compositionally biased toward polar residues: residues 356–367 and 379–389; these read RQPSLEQTTPMN and QRPTFYTGNSE. The segment covering 395-415 has biased composition (low complexity); that stretch reads FDGQMQQGSQQNNQNQNQNNR. The PDZ domain occupies 643–733; the sequence is HMILHRTENS…DTSVELIVSR (91 aa). The 123-residue stretch at 840–962 folds into the C2 1 domain; sequence IFGRIEVSFV…PLDGEHSLMC (123 aa). 3 disordered regions span residues 1054 to 1163, 1177 to 1311, and 1346 to 1373; these read ENDI…YLGD, GQMT…GGSA, and VGIP…KEST. Residues 1086–1097 show a composition bias toward polar residues; it reads WTQNHQRQSGYT. Over residues 1112–1121 the composition is skewed to basic residues; that stretch reads YNRRQQRRPR. Residues 1129 to 1154 show a composition bias toward basic and acidic residues; sequence MEREDMYDPTRKHRDDNEYSMRESVR. Over residues 1181–1230 the composition is skewed to low complexity; the sequence is PKQHNQQHQPHPLSQAHQQQQTAGVQPQHHQGFQQQQHPQQPNQQMQQMQ. Polar residues predominate over residues 1242–1255; it reads GSETLSVHSTNSMP. Over residues 1256-1277 the composition is skewed to low complexity; the sequence is TTMTTVNRRNMNANNTSNDNTS. A compositionally biased stretch (polar residues) spans 1278 to 1288; that stretch reads FAETPTANTNR. The segment covering 1297–1311 has biased composition (low complexity); it reads NSLASSSSVAGGGSA. The 120-residue stretch at 1417 to 1536 folds into the C2 2 domain; sequence VLGEIQIALM…LGSQPLIGWY (120 aa).

Restricted to discrete puncta in synapse-rich regions of the nervous system including the nerve ring, the ventral nerve cord and the dorsal nerve cord. Localized expression was found in the head.

It localises to the synapse. Regulates the efficiency of a post-docking step of the release pathway. Acts after vesicle docking likely via regulating priming. May regulate the conformational changes in syntaxin. Binding of vesicles via rab-3[GTP] to Rim may signal the presence of a docked synaptic vesicle. Rim may then signal to unc-13 to change the conformation of syntaxin from the closed to the open state. Syntaxin could then engage synaptobrevin on the docked vesicle to form SNARE complexes and to prime the vesicle for release. Not required for the development or the structural organization of synapses. May play a role in regulating entry into the dauer state. The chain is Rab-3-interacting molecule unc-10 from Caenorhabditis elegans.